Reading from the N-terminus, the 68-residue chain is MRFFFLLLTVALFLTSITGDDAERMLGMKEGGYVREDCGSDCMPCGGECCCEPNSCIDGTCHHESSPN.

The signal sequence occupies residues 1–29 (MRFFFLLLTVALFLTSITGDDAERMLGMK). A propeptide spanning residues 30-35 (EGGYVR) is cleaved from the precursor. Disulfide bonds link Cys-38–Cys-49, Cys-42–Cys-51, Cys-45–Cys-56, and Cys-50–Cys-61.

This sequence belongs to the conotoxin G2 superfamily. 1 family. In terms of tissue distribution, expressed by the venom duct.

It is found in the secreted. Functionally, this peptide promotes cell proliferation (EC(50)=17.85 uM) and inhibits apoptosis (EC(50)=2.2 uM). In Conus miles (Soldier cone), this protein is Conotoxin phi-MiXXVIIA.